The following is a 385-amino-acid chain: Probable protein phosphatase 2C 79 (385 aa).

A signal peptide spans 1-18 (MLSLFFNFLTSCLWPSSS). Residues 47–356 (DFSMAVVQAN…DDITVVVLFL (310 aa)) form the PPM-type phosphatase domain. Serine 76 is subject to Phosphoserine. The Mn(2+) site is built by aspartate 87, glycine 88, aspartate 288, and aspartate 347.

Belongs to the PP2C family. Mg(2+) serves as cofactor. Requires Mn(2+) as cofactor.

The enzyme catalyses O-phospho-L-seryl-[protein] + H2O = L-seryl-[protein] + phosphate. The catalysed reaction is O-phospho-L-threonyl-[protein] + H2O = L-threonyl-[protein] + phosphate. Functionally, may dephosphorylate and repress plasma membrane H(+)-ATPases (PM H(+)-ATPases, e.g. AHA1 and AHA2), thus influencing negatively plant growth and fitness. In Arabidopsis thaliana (Mouse-ear cress), this protein is Probable protein phosphatase 2C 79.